Here is a 350-residue protein sequence, read N- to C-terminus: Small ribosomal subunit biogenesis GTPase RsgA (350 aa).

Polar residues predominate over residues 1–17 (MSKNKLSKGQQRRVNAN). Positions 1–33 (MSKNKLSKGQQRRVNANHQRRLKTSKEKPDYDD) are disordered. In terms of domain architecture, CP-type G spans 104–273 (TSVLTRPDFY…VIDSPGVREF (170 aa)). Residues 160–163 (NKID) and 214–222 (GQSGVGKSS) each bind GTP. Residues cysteine 297, cysteine 302, histidine 304, and cysteine 310 each coordinate Zn(2+).

This sequence belongs to the TRAFAC class YlqF/YawG GTPase family. RsgA subfamily. In terms of assembly, monomer. Associates with 30S ribosomal subunit, binds 16S rRNA. The cofactor is Zn(2+).

It localises to the cytoplasm. In terms of biological role, one of several proteins that assist in the late maturation steps of the functional core of the 30S ribosomal subunit. Helps release RbfA from mature subunits. May play a role in the assembly of ribosomal proteins into the subunit. Circularly permuted GTPase that catalyzes slow GTP hydrolysis, GTPase activity is stimulated by the 30S ribosomal subunit. The chain is Small ribosomal subunit biogenesis GTPase RsgA from Escherichia coli O6:H1 (strain CFT073 / ATCC 700928 / UPEC).